Reading from the N-terminus, the 79-residue chain is Putative antitoxin VapB12 (79 aa).

The protein belongs to the UPF0330 family.

In terms of biological role, possibly the antitoxin component of a type II toxin-antitoxin (TA) system. Its cognate toxin is VapC12 (Potential). The polypeptide is Putative antitoxin VapB12 (vapB12) (Sulfurisphaera tokodaii (strain DSM 16993 / JCM 10545 / NBRC 100140 / 7) (Sulfolobus tokodaii)).